We begin with the raw amino-acid sequence, 974 residues long: UvrABC system protein A (974 aa).

An ATP-binding site is contributed by Gly34–Ser41. 2 consecutive ABC transporter domains span residues Trp331 to Leu610 and Ile630 to Lys959. Residue Gly663–Ser670 participates in ATP binding. A C4-type zinc finger spans residues Cys762–Cys788.

Belongs to the ABC transporter superfamily. UvrA family. Forms a heterotetramer with UvrB during the search for lesions.

The protein localises to the cytoplasm. In terms of biological role, the UvrABC repair system catalyzes the recognition and processing of DNA lesions. UvrA is an ATPase and a DNA-binding protein. A damage recognition complex composed of 2 UvrA and 2 UvrB subunits scans DNA for abnormalities. When the presence of a lesion has been verified by UvrB, the UvrA molecules dissociate. The polypeptide is UvrABC system protein A (Brucella abortus (strain 2308)).